The primary structure comprises 106 residues: Large ribosomal subunit protein uL22 (106 aa).

It belongs to the universal ribosomal protein uL22 family. As to quaternary structure, part of the 50S ribosomal subunit.

Its function is as follows. This protein binds specifically to 23S rRNA; its binding is stimulated by other ribosomal proteins, e.g. L4, L17, and L20. It is important during the early stages of 50S assembly. It makes multiple contacts with different domains of the 23S rRNA in the assembled 50S subunit and ribosome. Functionally, the globular domain of the protein is located near the polypeptide exit tunnel on the outside of the subunit, while an extended beta-hairpin is found that lines the wall of the exit tunnel in the center of the 70S ribosome. The polypeptide is Large ribosomal subunit protein uL22 (Nautilia profundicola (strain ATCC BAA-1463 / DSM 18972 / AmH)).